Here is a 180-residue protein sequence, read N- to C-terminus: Acireductone dioxygenase (180 aa).

Fe(2+) contacts are provided by histidine 96, histidine 98, glutamate 102, and histidine 140. Residues histidine 96, histidine 98, glutamate 102, and histidine 140 each coordinate Ni(2+).

Belongs to the acireductone dioxygenase (ARD) family. In terms of assembly, monomer. The cofactor is Fe(2+). It depends on Ni(2+) as a cofactor.

It carries out the reaction 1,2-dihydroxy-5-(methylsulfanyl)pent-1-en-3-one + O2 = 3-(methylsulfanyl)propanoate + CO + formate + 2 H(+). The enzyme catalyses 1,2-dihydroxy-5-(methylsulfanyl)pent-1-en-3-one + O2 = 4-methylsulfanyl-2-oxobutanoate + formate + 2 H(+). It participates in amino-acid biosynthesis; L-methionine biosynthesis via salvage pathway; L-methionine from S-methyl-5-thio-alpha-D-ribose 1-phosphate: step 5/6. Catalyzes 2 different reactions between oxygen and the acireductone 1,2-dihydroxy-3-keto-5-methylthiopentene (DHK-MTPene) depending upon the metal bound in the active site. Fe-containing acireductone dioxygenase (Fe-ARD) produces formate and 2-keto-4-methylthiobutyrate (KMTB), the alpha-ketoacid precursor of methionine in the methionine recycle pathway. Ni-containing acireductone dioxygenase (Ni-ARD) produces methylthiopropionate, carbon monoxide and formate, and does not lie on the methionine recycle pathway. The polypeptide is Acireductone dioxygenase (Synechococcus sp. (strain WH7803)).